The following is a 321-amino-acid chain: Serine/threonine-protein phosphatase PP1 (321 aa).

The Mn(2+) site is built by D60, H62, D88, and N120. Residue H121 is the Proton donor of the active site. Residues H169 and H244 each contribute to the Mn(2+) site. A disordered region spans residues 298–321 (KKLTNDSNGRPLTPPRNKQQKPKK).

It belongs to the PPP phosphatase family. In terms of assembly, interacts with dpiA. It depends on Mn(2+) as a cofactor.

The enzyme catalyses O-phospho-L-seryl-[protein] + H2O = L-seryl-[protein] + phosphate. It carries out the reaction O-phospho-L-threonyl-[protein] + H2O = L-threonyl-[protein] + phosphate. Its activity is regulated as follows. Inhibited by okadaic acid, tautomycin and calyculin A. Inhibited by phosphatase inhibitor 2 (dpiA). Its function is as follows. Protein phosphatase activity in vitro. The polypeptide is Serine/threonine-protein phosphatase PP1 (pppB) (Dictyostelium discoideum (Social amoeba)).